The sequence spans 604 residues: Acetylcholinesterase 4 (604 aa).

The signal sequence occupies residues 1–23; that stretch reads MKPKLVFLPFLIFITVFIEESEA. Cysteines 88 and 115 form a disulfide. N-linked (GlcNAc...) asparagine glycans are attached at residues Asn96 and Asn128. The active-site Acyl-ester intermediate is Ser219. Cys273 and Cys284 are oxidised to a cystine. N-linked (GlcNAc...) asparagine glycans are attached at residues Asn274 and Asn299. Glu347 acts as the Charge relay system in catalysis. 2 N-linked (GlcNAc...) asparagine glycosylation sites follow: Asn400 and Asn446. The cysteines at positions 426 and 561 are disulfide-linked. The active-site Charge relay system is His477.

The protein belongs to the type-B carboxylesterase/lipase family.

Its subcellular location is the synapse. It localises to the secreted. It is found in the cell membrane. It carries out the reaction acetylcholine + H2O = choline + acetate + H(+). In terms of biological role, rapidly hydrolyzes choline released into the synapse. The chain is Acetylcholinesterase 4 (ace-4) from Caenorhabditis briggsae.